Consider the following 316-residue polypeptide: Pantothenate kinase (316 aa).

Position 95–102 (G95–S102) interacts with ATP.

It belongs to the prokaryotic pantothenate kinase family.

Its subcellular location is the cytoplasm. It catalyses the reaction (R)-pantothenate + ATP = (R)-4'-phosphopantothenate + ADP + H(+). Its pathway is cofactor biosynthesis; coenzyme A biosynthesis; CoA from (R)-pantothenate: step 1/5. The protein is Pantothenate kinase of Shewanella sp. (strain MR-7).